The chain runs to 292 residues: Small ribosomal subunit protein uS2 (292 aa).

The tract at residues threonine 265–tryptophan 292 is disordered. Residues alanine 277–tryptophan 292 are compositionally biased toward low complexity.

Belongs to the universal ribosomal protein uS2 family. In terms of assembly, component of the small ribosomal subunit. Mature ribosomes consist of a small (40S) and a large (60S) subunit. The 40S subunit contains about 33 different proteins and 1 molecule of RNA (18S). The 60S subunit contains about 49 different proteins and 3 molecules of RNA (25S, 5.8S and 5S). Interacts with RPS21.

The protein resides in the cytoplasm. Its function is as follows. Required for the assembly and/or stability of the 40S ribosomal subunit. Required for the processing of the 20S rRNA-precursor to mature 18S rRNA in a late step of the maturation of 40S ribosomal subunits. This is Small ribosomal subunit protein uS2 from Cryptococcus neoformans var. neoformans serotype D (strain B-3501A) (Filobasidiella neoformans).